The following is a 374-amino-acid chain: Glutamine synthetase (374 aa).

The segment at 2–25 (TTSASSHLNKGIKQVYMSLPQGEK) is required for glutamine-induced ubiquitination by CRL4(CRBN) and proteasomal degradation. N6-acetyllysine occurs at positions 11 and 14. In terms of domain architecture, GS beta-grasp spans 24–106 (EKVQAMYIWI…VLCESFQVQF (83 aa)). Positions 114–374 (LRHTCKRIMD…TGDEPFQYKN (261 aa)) constitute a GS catalytic domain. ATP is bound at residue glutamate 135. Glutamate 135, glutamate 137, glutamate 197, and glutamate 204 together coordinate Mn(2+). Residue 204–209 (EFQIGP) participates in ATP binding. Residue 247-248 (NW) participates in L-glutamate binding. Histidine 254 lines the Mn(2+) pocket. ATP-binding positions include 256-258 (NFS), arginine 320, and arginine 325. Arginine 320 lines the L-glutamate pocket. Residue 337–339 (YFE) coordinates ADP. Residue glutamate 339 participates in Mn(2+) binding. An L-glutamate-binding site is contributed by arginine 341. Serine 344 carries the phosphoserine modification.

Belongs to the glutamine synthetase family. As to quaternary structure, decamer; composed of two pentamers. Interacts with PALMD. Interacts with RHOJ. Interacts with BEST2; this interaction tethers a fraction of GLUL to the membrane, causing a decrease of cytosolic glutamine synthase (GS) activity and inhibits the chloride channel activity of BEST2 by affecting the gating at the aperture in the absence of intracellular glutamate. The cofactor is Mg(2+). Requires Mn(2+) as cofactor. Palmitoylated; undergoes autopalmitoylation. In terms of processing, acetylated by EP300/p300; acetylation is stimulated by increased glutamine levels and promotes ubiquitin-mediated proteasomal degradation. Post-translationally, ubiquitinated by ZNRF1. Ubiquitinated by the DCX (DDB1-CUL4-X-box) E3 ubiquitin-protein ligase complex called CRL4(CRBN), leading to proteasomal degradation.

It localises to the cytoplasm. The protein localises to the cytosol. Its subcellular location is the microsome. The protein resides in the mitochondrion. It is found in the cell membrane. It carries out the reaction L-glutamate + NH4(+) + ATP = L-glutamine + ADP + phosphate + H(+). It catalyses the reaction L-cysteinyl-[protein] + hexadecanoyl-CoA = S-hexadecanoyl-L-cysteinyl-[protein] + CoA. Its activity is regulated as follows. Glutamine synthetase activity is inhibited by methionine sulfoximine (MSO). In terms of biological role, glutamine synthetase that catalyzes the ATP-dependent conversion of glutamate and ammonia to glutamine. Its role depends on tissue localization: in the brain, it regulates the levels of toxic ammonia and converts neurotoxic glutamate to harmless glutamine, whereas in the liver, it is one of the enzymes responsible for the removal of ammonia. Plays a key role in ammonium detoxification during erythropoiesis: the glutamine synthetase activity is required to remove ammonium generated by porphobilinogen deaminase (HMBS) during heme biosynthesis to prevent ammonium accumulation and oxidative stress. Essential for proliferation of fetal skin fibroblasts. Independently of its glutamine synthetase activity, required for endothelial cell migration during vascular development. Involved in angiogenesis by regulating membrane localization and activation of the GTPase RHOJ, possibly by promoting RHOJ palmitoylation. May act as a palmitoyltransferase for RHOJ: able to autopalmitoylate and then transfer the palmitoyl group to RHOJ. Plays a role in ribosomal 40S subunit biogenesis. Through the interaction with BEST2, inhibits BEST2 channel activity by affecting the gating at the aperture in the absence of intracellular L-glutamate, but sensitizes BEST2 to intracellular L-glutamate, which promotes the opening of BEST2 and thus relieves its inhibitory effect on BEST2. The sequence is that of Glutamine synthetase from Macaca fascicularis (Crab-eating macaque).